Here is a 467-residue protein sequence, read N- to C-terminus: 3-isopropylmalate dehydratase large subunit (467 aa).

[4Fe-4S] cluster contacts are provided by cysteine 349, cysteine 408, and cysteine 411.

The protein belongs to the aconitase/IPM isomerase family. LeuC type 1 subfamily. As to quaternary structure, heterodimer of LeuC and LeuD. The cofactor is [4Fe-4S] cluster.

It catalyses the reaction (2R,3S)-3-isopropylmalate = (2S)-2-isopropylmalate. Its pathway is amino-acid biosynthesis; L-leucine biosynthesis; L-leucine from 3-methyl-2-oxobutanoate: step 2/4. Its function is as follows. Catalyzes the isomerization between 2-isopropylmalate and 3-isopropylmalate, via the formation of 2-isopropylmaleate. The chain is 3-isopropylmalate dehydratase large subunit from Dinoroseobacter shibae (strain DSM 16493 / NCIMB 14021 / DFL 12).